A 481-amino-acid chain; its full sequence is 3-isopropylmalate dehydratase large subunit (481 aa).

The [4Fe-4S] cluster site is built by Cys-357, Cys-417, and Cys-420.

It belongs to the aconitase/IPM isomerase family. LeuC type 1 subfamily. In terms of assembly, heterodimer of LeuC and LeuD. It depends on [4Fe-4S] cluster as a cofactor.

The catalysed reaction is (2R,3S)-3-isopropylmalate = (2S)-2-isopropylmalate. Its pathway is amino-acid biosynthesis; L-leucine biosynthesis; L-leucine from 3-methyl-2-oxobutanoate: step 2/4. Catalyzes the isomerization between 2-isopropylmalate and 3-isopropylmalate, via the formation of 2-isopropylmaleate. This Maricaulis maris (strain MCS10) (Caulobacter maris) protein is 3-isopropylmalate dehydratase large subunit.